Here is a 545-residue protein sequence, read N- to C-terminus: Hyaluronidase PH-20 (545 aa).

Positions 1-35 (MGVLKFKHIFFGSAVELSGVFQIVFIFLLIPCCLT) are cleaved as a signal peptide. Disulfide bonds link Cys-60–Cys-355 and Cys-224–Cys-239. A glycan (N-linked (GlcNAc...) asparagine) is linked at Asn-82. Catalysis depends on Glu-148, which acts as the Proton donor. N-linked (GlcNAc...) asparagine glycosylation occurs at Asn-180. Residue Asn-372 is glycosylated (N-linked (GlcNAc...) asparagine). Disulfide bonds link Cys-380–Cys-391, Cys-385–Cys-439, and Cys-441–Cys-468.

It belongs to the glycosyl hydrolase 56 family. As to expression, testis.

The protein localises to the cell membrane. It carries out the reaction Random hydrolysis of (1-&gt;4)-linkages between N-acetyl-beta-D-glucosamine and D-glucuronate residues in hyaluronate.. Its function is as follows. Involved in sperm-egg adhesion. Upon fertilization sperm must first penetrate a layer of cumulus cells that surrounds the egg before reaching the zona pellucida. The cumulus cells are embedded in a matrix containing hyaluronic acid which is formed prior to ovulation. This protein aids in penetrating the layer of cumulus cells by digesting hyaluronic acid. The polypeptide is Hyaluronidase PH-20 (SPAM1) (Oryctolagus cuniculus (Rabbit)).